The chain runs to 341 residues: Protein pelota homolog (341 aa).

The protein belongs to the eukaryotic release factor 1 family. Pelota subfamily. As to quaternary structure, monomer. A divalent metal cation is required as a cofactor.

The protein resides in the cytoplasm. May function in recognizing stalled ribosomes, interact with stem-loop structures in stalled mRNA molecules, and effect endonucleolytic cleavage of the mRNA. May play a role in the release non-functional ribosomes and degradation of damaged mRNAs. Has endoribonuclease activity. This chain is Protein pelota homolog, found in Methanospirillum hungatei JF-1 (strain ATCC 27890 / DSM 864 / NBRC 100397 / JF-1).